The following is a 252-amino-acid chain: Oil body-associated protein 2A (252 aa).

Positions 1–31 (MASSDGKPLPTPASVGGGGGSSTAPPGQPTT) are disordered. Low complexity predominate over residues 22 to 31 (STAPPGQPTT).

This sequence belongs to the OBAP family.

This Zea mays (Maize) protein is Oil body-associated protein 2A.